The primary structure comprises 1045 residues: Elongation factor 3 (1045 aa).

HEAT repeat units follow at residues 5–42 (DQSL…GNII), 43–85 (EHDI…PSVE), 86–123 (PFVI…AINP), 125–162 (AIKA…AAKE), 166–203 (LRMP…TVDN), 205–241 (DIER…EVTP), and 242–279 (ATLS…LVED). Positions 42, 44, and 83 each coordinate ADP. The ADP site is built by Thr392, His396, and Glu397. 2 consecutive ABC transporter domains span residues 426–641 (DEGE…YYEL) and 667–993 (VKVS…KKED). Positions 703, 922, 925, and 951 each coordinate ADP. The disordered stretch occupies residues 974-1045 (SGHNWVSGQG…AYVSSDDEDF (72 aa)). The segment covering 1007–1031 (GGKKKKKLSSAELRKKKKERMKKKK) has biased composition (basic residues).

This sequence belongs to the ABC transporter superfamily. ABCF family. EF3 subfamily. As to quaternary structure, monomer.

The protein localises to the cytoplasm. It is found in the cytosol. The enzyme catalyses ATP + H2O = ADP + phosphate + H(+). Its pathway is protein biosynthesis; polypeptide chain elongation. Ribosome-dependent ATPase that functions in cytoplasmic translation elongation. Required for the ATP-dependent release of deacylated tRNA from the ribosomal E-site during protein biosynthesis. Stimulates the eEF1A-dependent binding of aminoacyl-tRNA to the ribosomal A-site, which has reduced affinity for tRNA as long as the E-site is occupied. Assists translation termination by stimulating the release of nascent protein from the ribosome by release factors. The polypeptide is Elongation factor 3 (TEF3) (Candida glabrata (strain ATCC 2001 / BCRC 20586 / JCM 3761 / NBRC 0622 / NRRL Y-65 / CBS 138) (Yeast)).